Here is a 113-residue protein sequence, read N- to C-terminus: Protein SPIRAL1-like 1 (113 aa).

The segment covering 1 to 12 (MGRGVSVGGGQS) has biased composition (gly residues). The interval 1-50 (MGRGVSVGGGQSSLGYLFGSGEAPKPAINNAPAPSSETLPISADPSPKHV) is disordered. The span at 23–34 (APKPAINNAPAP) shows a compositional bias: low complexity. Serine 69 is modified (phosphoserine). The segment at 79–113 (QNTGNFLTDRPSTKVHAAPGGGSSLDYLFGGGGSN) is disordered. Residues 97–113 (PGGGSSLDYLFGGGGSN) show a composition bias toward gly residues.

This sequence belongs to the SPIRAL1 family. As to expression, detected in pollen of mature flowers.

Its function is as follows. Acts redundantly with SPR1 in maintaining the cortical microtubules organization essential for anisotropic cell growth. The sequence is that of Protein SPIRAL1-like 1 (SP1L1) from Arabidopsis thaliana (Mouse-ear cress).